The following is an 864-amino-acid chain: Probable M1 family aminopeptidase 2 (864 aa).

Substrate is bound by residues glutamate 149 and 289–293 (GAMEN). Histidine 325 is a binding site for Zn(2+). Glutamate 326 (proton acceptor) is an active-site residue. 2 residues coordinate Zn(2+): histidine 329 and glutamate 348.

Belongs to the peptidase M1 family. Zn(2+) is required as a cofactor.

This Encephalitozoon cuniculi (strain GB-M1) (Microsporidian parasite) protein is Probable M1 family aminopeptidase 2.